The sequence spans 333 residues: uncharacterized protein (333 aa).

This is an uncharacterized protein from Caenorhabditis elegans.